The chain runs to 177 residues: Adenylyl-sulfate kinase (177 aa).

12–19 is an ATP binding site; that stretch reads GLSGAGKT. Ser86 serves as the catalytic Phosphoserine intermediate.

Belongs to the APS kinase family.

The enzyme catalyses adenosine 5'-phosphosulfate + ATP = 3'-phosphoadenylyl sulfate + ADP + H(+). The protein operates within sulfur metabolism; hydrogen sulfide biosynthesis; sulfite from sulfate: step 2/3. Catalyzes the synthesis of activated sulfate. The chain is Adenylyl-sulfate kinase from Picosynechococcus sp. (strain ATCC 27264 / PCC 7002 / PR-6) (Agmenellum quadruplicatum).